A 288-amino-acid polypeptide reads, in one-letter code: Type II restriction enzyme DpnII (288 aa).

The protein belongs to the DpnII type II restriction endonuclease family. Homodimer.

The enzyme catalyses Endonucleolytic cleavage of DNA to give specific double-stranded fragments with terminal 5'-phosphates.. Its function is as follows. A P subtype restriction enzyme that recognizes the double-stranded unmethylated sequence 5'-GATC-3' and cleaves before G-1. In Streptococcus pneumoniae, this protein is Type II restriction enzyme DpnII.